Consider the following 259-residue polypeptide: Ras-related protein Rab-34 (259 aa).

At Met-1 the chain carries N-acetylmethionine. GTP-binding residues include Ser-62, Val-63, Gly-64, Lys-65, Thr-66, Asp-78, Tyr-81, and Thr-84. Thr-66 serves as a coordination point for Mg(2+). Residues 71–89 (RFCKDTFDKNYKATIGVDF) carry the Switch 1 motif. Residues Thr-84 and Asp-107 each coordinate Mg(2+). The Switch 2 motif lies at 108–127 (TAGQERFKCIASTYYRGAQA). GTP-binding residues include Gly-110, Lys-167, Asp-169, and Ser-198. A phosphoserine mark is found at Ser-241 and Ser-244. 2 S-geranylgeranyl cysteine lipidation sites follow: Cys-257 and Cys-258.

This sequence belongs to the small GTPase superfamily. Rab family. Interacts with RILP. The GTP-bound form interacts with REP15. Requires Mg(2+) as cofactor.

It is found in the cytoplasm. The protein resides in the golgi apparatus. Its subcellular location is the cytoplasmic vesicle. It localises to the phagosome. The protein localises to the phagosome membrane. It is found in the cell projection. The protein resides in the cilium. Its subcellular location is the cytoskeleton. It localises to the microtubule organizing center. The protein localises to the centrosome. It is found in the centriole. The enzyme catalyses GTP + H2O = GDP + phosphate + H(+). With respect to regulation, regulated by guanine nucleotide exchange factors (GEFs) which promote the exchange of bound GDP for free GTP. Regulated by GTPase activating proteins (GAPs) which increase the GTP hydrolysis activity. Inhibited by GDP dissociation inhibitors (GDIs). In terms of biological role, the small GTPases Rab are key regulators of intracellular membrane trafficking, from the formation of transport vesicles to their fusion with membranes. Rabs cycle between an inactive GDP-bound form and an active GTP-bound form that is able to recruit to membranes different sets of downstream effectors directly responsible for vesicle formation, movement, tethering and fusion. RAB34 transports protein involved in the redistribution of lysosomes to the peri-Golgi region. Plays a role in the maturation of phagosomes that engulf pathogens, such as S.aureus and M.tuberculosis. Plays a role in the fusion of phagosomes with lysosomes. Involved in ciliogenesis. In particular, it is required for early steps of the intracellular cilium assembly pathway initiated by trafficking and docking of ciliary vesicles to the centrioles in the cytoplasm, followed by axoneme formation in the cytoplasm. After axoneme elongation, the centrioles migrate close to the cell surface so that ciliary vesicles can fuse with the plasma membrane to expose cilia to the extracellular space. It seems dispensable for ciliogenesis via the extracellular pathway where cilium assembly begins after migration and docking of the centriole to the plasma membrane. Also acts as a positive regulator of hedgehog signaling and regulates ciliary function. In Homo sapiens (Human), this protein is Ras-related protein Rab-34.